Consider the following 340-residue polypeptide: Protein RecA (340 aa).

65-72 contributes to the ATP binding site; sequence GPESGGKT.

Belongs to the RecA family.

The protein localises to the cytoplasm. Functionally, can catalyze the hydrolysis of ATP in the presence of single-stranded DNA, the ATP-dependent uptake of single-stranded DNA by duplex DNA, and the ATP-dependent hybridization of homologous single-stranded DNAs. It interacts with LexA causing its activation and leading to its autocatalytic cleavage. The polypeptide is Protein RecA (Thermus thermophilus (strain ATCC 27634 / DSM 579 / HB8)).